Here is an 899-residue protein sequence, read N- to C-terminus: CNK3/IPCEF1 fusion protein (899 aa).

Positions 7 to 72 (WSPKQVVDWT…LEAVDLLCAL (66 aa)) constitute an SAM domain. The 95-residue stretch at 80-174 (NMKNLVLKLR…TTVQKDCFVA (95 aa)) folds into the CRIC domain. The region spanning 211-293 (EVHLPNIKPG…GVVLLLKKRP (83 aa)) is the PDZ domain. Disordered stretches follow at residues 309-334 (WKPPLVQTSPPPATTQSPESTMDTSL) and 347-390 (PPPP…FLDQ). Positions 332–457 (TSLKKEKSAI…ARPRGHGRKA (126 aa)) constitute a DUF1170 domain. Ser-383 carries the phosphoserine modification. The 100-residue stretch at 503 to 602 (HADCQGWLYK…WLNKLGSAVI (100 aa)) folds into the PH domain. Disordered regions lie at residues 605-687 (ESTT…PDTV), 735-770 (LSSDDTSSLSSNHDHLTVPDKPAGSKIMDKEETKVS), and 868-899 (QQQRASPAPDDTDDTPQELKKSPSSPSVENSI). Positions 613 to 624 (CYSESEQEDPEI) are enriched in acidic residues. Positions 634–662 (ASQTQSLTAQQASSSSPSLSGTSYSFSSL) are enriched in low complexity. A compositionally biased stretch (polar residues) spans 663–676 (ENTVKTPSSFPSSL). Residues 735-745 (LSSDDTSSLSS) show a composition bias toward low complexity. The span at 761–770 (IMDKEETKVS) shows a compositional bias: basic and acidic residues. The tract at residues 851–899 (KYREWKVMNTLLIQDIYQQQRASPAPDDTDDTPQELKKSPSSPSVENSI) is required for interaction with CYTH2. Ser-873 carries the post-translational modification Phosphoserine. Over residues 889 to 899 (SPSSPSVENSI) the composition is skewed to polar residues.

It belongs to the CNKSR family.

Its function is as follows. Required for hepatocyte growth factor (HGF)-dependent activation of Arf6 and HGF-stimulated cell migration. This is CNK3/IPCEF1 fusion protein (CNK3/IPCEF1) from Homo sapiens (Human).